A 304-amino-acid polypeptide reads, in one-letter code: Non-specific ribonucleoside hydrolase RihC (304 aa).

Residue His233 is part of the active site.

The protein belongs to the IUNH family. RihC subfamily.

Its function is as follows. Hydrolyzes both purine and pyrimidine ribonucleosides with a broad-substrate specificity. The protein is Non-specific ribonucleoside hydrolase RihC of Escherichia coli (strain SMS-3-5 / SECEC).